Consider the following 519-residue polypeptide: GATA zinc finger domain-containing protein 8 (519 aa).

Disordered regions lie at residues 25 to 182 (YSTG…SSSG), 198 to 249 (SNIN…SNNT), 273 to 359 (SNNM…NNKQ), and 431 to 453 (DERQ…KRRE). The span at 37–156 (TNNSQNKTNN…SSSITSPSSN (120 aa)) shows a compositional bias: low complexity. The span at 172–182 (SPNNKQVSSSG) shows a compositional bias: polar residues. Over residues 273–357 (SNNMNINNQH…SNINNNNNNN (85 aa)) the composition is skewed to low complexity. Residues 429–461 (KTDERQQKKRMESDKNAEKREKRREASRLLNNV) are a coiled coil. A GATA-type zinc finger spans residues 462–487 (CRNCKTTETPEWRKGPDGTKSLCNAC).

The chain is GATA zinc finger domain-containing protein 8 (gtaH) from Dictyostelium discoideum (Social amoeba).